Here is a 152-residue protein sequence, read N- to C-terminus: UPF0178 protein SaurJH9_0705 (152 aa).

It belongs to the UPF0178 family.

The sequence is that of UPF0178 protein SaurJH9_0705 from Staphylococcus aureus (strain JH9).